A 71-amino-acid chain; its full sequence is uncharacterized protein (71 aa).

A helical transmembrane segment spans residues 5-22 (VVMCSGLFCSVFAGAFML).

It is found in the membrane. This is an uncharacterized protein from Bacillus subtilis (strain 168).